Consider the following 244-residue polypeptide: Thiol S-methyltransferase TMT1B (244 aa).

Positions 1-23 (MDVLVPLLQLLVLLLTLPLHLLA) are cleaved as a signal peptide.

The protein belongs to the methyltransferase superfamily. In terms of tissue distribution, highly expressed in liver and kidney. No expression in testis, heart, lung, brain, spleen or cultured fibroblasts.

The protein resides in the endoplasmic reticulum membrane. Its subcellular location is the lipid droplet. The protein localises to the microsome. It is found in the cytoplasm. It localises to the cytosol. The enzyme catalyses a thiol + S-adenosyl-L-methionine = a methyl thioether + S-adenosyl-L-homocysteine + H(+). In terms of biological role, thiol S-methyltransferase that catalyzes the transfer of a methyl group from S-adenosyl-L-methionine to alkyl and phenolic thiol-containing acceptor substrates. Together with TMT1B accounts for most of S-thiol methylation activity in the endoplasmic reticulum of hepatocytes. Selectively methylates S-centered nucleophiles from metabolites such as hydrogen sulfide and dithiothreitol. The protein is Thiol S-methyltransferase TMT1B (Tmt1b) of Rattus norvegicus (Rat).